Here is a 176-residue protein sequence, read N- to C-terminus: Small ribosomal subunit protein uS5 (176 aa).

The region spanning 11–74 is the S5 DRBM domain; sequence LSEVLVDVNR…QAAKKKMMKV (64 aa).

The protein belongs to the universal ribosomal protein uS5 family. In terms of assembly, part of the 30S ribosomal subunit. Contacts proteins S4 and S8.

Functionally, with S4 and S12 plays an important role in translational accuracy. In terms of biological role, located at the back of the 30S subunit body where it stabilizes the conformation of the head with respect to the body. The protein is Small ribosomal subunit protein uS5 of Rickettsia bellii (strain RML369-C).